A 117-amino-acid polypeptide reads, in one-letter code: MRPAEDIIKRPYITEKSNAEIANGKYTFIVDAKATKTEIRQAVEKLFQVKVLKVNTVNYKGKRKRLGVHEGFRPDWKKAIVKIDTEPKPVTYLTEGGKTATTTKKYKTSIEEFGAAQ.

Belongs to the universal ribosomal protein uL23 family. In terms of assembly, part of the 50S ribosomal subunit. Contacts protein L29, and trigger factor when it is bound to the ribosome.

Its function is as follows. One of the early assembly proteins it binds 23S rRNA. One of the proteins that surrounds the polypeptide exit tunnel on the outside of the ribosome. Forms the main docking site for trigger factor binding to the ribosome. This Acetivibrio thermocellus (strain ATCC 27405 / DSM 1237 / JCM 9322 / NBRC 103400 / NCIMB 10682 / NRRL B-4536 / VPI 7372) (Clostridium thermocellum) protein is Large ribosomal subunit protein uL23.